Consider the following 225-residue polypeptide: Uracil-DNA glycosylase (225 aa).

Catalysis depends on Asp-64, which acts as the Proton acceptor.

Belongs to the uracil-DNA glycosylase (UDG) superfamily. UNG family.

It localises to the cytoplasm. It carries out the reaction Hydrolyzes single-stranded DNA or mismatched double-stranded DNA and polynucleotides, releasing free uracil.. Its function is as follows. Excises uracil residues from the DNA which can arise as a result of misincorporation of dUMP residues by DNA polymerase or due to deamination of cytosine. The chain is Uracil-DNA glycosylase from Lachnoclostridium phytofermentans (strain ATCC 700394 / DSM 18823 / ISDg) (Clostridium phytofermentans).